Consider the following 247-residue polypeptide: Cell division protein ZapD (247 aa).

It belongs to the ZapD family. Interacts with FtsZ.

It localises to the cytoplasm. Cell division factor that enhances FtsZ-ring assembly. Directly interacts with FtsZ and promotes bundling of FtsZ protofilaments, with a reduction in FtsZ GTPase activity. In Shigella boydii serotype 18 (strain CDC 3083-94 / BS512), this protein is Cell division protein ZapD.